A 356-amino-acid polypeptide reads, in one-letter code: MHHQWLLLAACFWVIFMFMVASKFITLTFKDPDGYSAKQEFVFLTAMPEAEKLRGEKHFSEVMKPTGKMLSESHPDQPPVYLERLELIRNACKEEALRNLSHTEVSKFVLDRIFVCDKHKILFCQTPKVGNTQWKKVLIVLNGAFSSIEEIPENVVHDHEKNGLPRLSSFSKIGIQKRLKTYFKFFIVRDPFERLISAFKDKFVHNPRFEPWYRHEIAPGIIRKYRKNRTETRGIQFEDFVRYLGDPNRRWLDLQFGDHIIHWVTYVKLCAPCEIKYSVIGHHETLEADAPYILKEAGIDHLVSYPTIPPGITMYNRTKVEQYFLGISKRDIRRLYARFEGDFKLFGYQKPDFLLN.

Residues 1–6 are Cytoplasmic-facing; that stretch reads MHHQWL. Residues 7–27 traverse the membrane as a helical; Signal-anchor for type II membrane protein segment; the sequence is LLAACFWVIFMFMVASKFITL. The Lumenal segment spans residues 28 to 356; that stretch reads TFKDPDGYSA…GYQKPDFLLN (329 aa). N-linked (GlcNAc...) asparagine glycosylation is present at asparagine 99. Residues 127 to 133 and 189 to 197 each bind 3'-phosphoadenylyl sulfate; these read PKVGNTQ and RDPFERLIS. Asparagine 228 and asparagine 316 each carry an N-linked (GlcNAc...) asparagine glycan.

It belongs to the sulfotransferase 2 family. In terms of tissue distribution, in myogenic progenitors, it is ubiquitously expressed.

It localises to the golgi apparatus membrane. The catalysed reaction is 3-O-{beta-D-GlcA-(1-&gt;[3)-alpha-D-Xyl-(1-&gt;3)-beta-D-GlcA-(1-&gt;](n)-4)-beta-D-Xyl-(1-&gt;4)-Rib-ol-P-Rib-ol-P-3-beta-D-GalNAc-(1-&gt;3)-beta-D-GlcNAc-(1-&gt;4)-O-6-P-alpha-D-Man}-L-Thr-[protein] + 3'-phosphoadenylyl sulfate = 3-O-{O-3-S-beta-D-GlcA-(1-&gt;[3)-alpha-D-Xyl-(1-&gt;3)-beta-D-GlcA-(1-&gt;](n)-4)-beta-D-Xyl-(1-&gt;4)-Rib-ol-P-Rib-ol-P-3-beta-D-GalNAc-(1-&gt;3)-beta-D-GlcNAc-(1-&gt;4)-O-6-P-alpha-D-Man}-L-Thr-[protein] + adenosine 3',5'-bisphosphate + H(+). The enzyme catalyses 17beta-estradiol 3-O-(beta-D-glucuronate) + 3'-phosphoadenylyl sulfate = 17beta-estradiol 3-O-(3-sulfo-beta-D-glucuronate) + adenosine 3',5'-bisphosphate + H(+). It catalyses the reaction 17beta-estradiol 3-O-(beta-D-glucuronate) 17-sulfate + 3'-phosphoadenylyl sulfate = 17beta-estradiol 3-O-(3-sulfo-beta-D-glucuronate) 17-sulfate + adenosine 3',5'-bisphosphate + H(+). It carries out the reaction 17beta-estradiol 17-O-(beta-D-glucuronate) + 3'-phosphoadenylyl sulfate = 17beta-estradiol 17-O-(3-sulfo-beta-D-glucuronate) + adenosine 3',5'-bisphosphate + H(+). The catalysed reaction is 16alpha,17beta-estriol 3-O-(beta-D-glucuronate) + 3'-phosphoadenylyl sulfate = 16alpha,17beta-estriol 3-O-(3-sulfo-beta-D-glucuronate) + adenosine 3',5'-bisphosphate + H(+). The enzyme catalyses 16alpha,17beta-estriol 16-O-(beta-D-glucuronate) + 3'-phosphoadenylyl sulfate = 16alpha,17beta-estriol 16-O-(3-sulfo-beta-D-glucuronate) + adenosine 3',5'-bisphosphate + H(+). It catalyses the reaction 16alpha,17beta-estriol 17-O-(beta-D-glucuronate) + 3'-phosphoadenylyl sulfate = 16alpha,17beta-estriol 17-O-(3-sulfo-beta-D-glucuronate) + adenosine 3',5'-bisphosphate + H(+). It carries out the reaction estrone 3-O-(beta-D-glucuronate) + 3'-phosphoadenylyl sulfate = estrone 3-O-(3-sulfo-beta-D-glucuronate) + adenosine 3',5'-bisphosphate + H(+). The catalysed reaction is 3alpha,20alpha-dihydroxy-5beta-pregnane 3-O-(beta-D-glucuronate) + 3'-phosphoadenylyl sulfate = 3alpha,20alpha-dihydroxy-5beta-pregnane 3-O-(3-sulfo-beta-D-glucuronate) + adenosine 3',5'-bisphosphate + H(+). The enzyme catalyses testosterone 17-O-(beta-D-glucuronate) + 3'-phosphoadenylyl sulfate = testosterone 17-O-(3-sulfo-beta-D-glucuronate) + adenosine 3',5'-bisphosphate + H(+). It catalyses the reaction 3beta-androst-5-en-17-one 3-O-(beta-D-glucuronate) + 3'-phosphoadenylyl sulfate = 3beta-androst-5-en-17-one 3-O-(3-sulfo-beta-D-glucuronate) + adenosine 3',5'-bisphosphate + H(+). It carries out the reaction 3alpha,17alpha-dihydroxy-5beta-androstane-11-one-17beta-carboxylate 3-O-(beta-D-glucuronate) + 3'-phosphoadenylyl sulfate = 3alpha,17alpha-dihydroxy-5beta-androstane-11-one-17beta-carboxylate 3-O-(3-sulfo-beta-D-glucuronate) + adenosine 3',5'-bisphosphate + H(+). The catalysed reaction is 3alpha-hydroxyetiocholan-17-one 3-O-(beta-D-glucuronate) + 3'-phosphoadenylyl sulfate = 3alpha-hydroxyetiocholan-17-one 3-O-(3-sulfo-beta-D-glucuronate) + adenosine 3',5'-bisphosphate + H(+). The protein operates within steroid metabolism. It participates in protein modification; carbohydrate sulfation. Its function is as follows. Catalyzes the transfer of sulfate from 3'-phosphoadenylyl sulfate (PAPS) to position 3 of terminal glucuronic acid of both protein- and lipid-linked oligosaccharides. Participates in biosynthesis of HNK-1 carbohydrate structure 3-O-sulfo-beta-D-GlcA-(1-&gt;3)-beta-D-Gal-(1-&gt;4)-D-GlcNAc-R, a sulfated glucuronyl-lactosaminyl residue carried by many neural recognition molecules, which is involved in cell interactions during ontogenetic development and in synaptic plasticity in the adult. May be indirectly involved in synapse plasticity of the hippocampus, via its role in HNK-1 biosynthesis. Sulfates terminal glucuronyl residue of the laminin globular (LG)-domain binding epitope on DAG1/alpha-dystroglycan and prevents further polymerization by LARGE1 glycosyltransferase. Likely defines the chain length of LG epitope, conferring binding specificity to extracellular matrix components. Plays a role in down-regulating the steroid hormones. Sulfates glucuronidated estrogens and androgens with an impact in hormone cycle and fertility. Has a preference for glucuronyl moiety at the 3-hydroxyl group of a sterol ring rather than the 17-hydroxyl group, showing high catalytic efficiency for 17beta-estradiol 3-O-(beta-D-glucuronate) and dehydroepiandrosterone 3-O-(beta-D-glucuronate) hormones. In Rattus norvegicus (Rat), this protein is Carbohydrate sulfotransferase 10 (Chst10).